The primary structure comprises 299 residues: HTH-type transcriptional regulator CynR (299 aa).

Residues 1–58 (MLSRHINYFLAVAEHGSFTRAASALHVSQPALSQQIRQLEESLGVPLFDRSGRTIRLT) form the HTH lysR-type domain. Residues 18–37 (FTRAASALHVSQPALSQQIR) constitute a DNA-binding region (H-T-H motif).

It belongs to the LysR transcriptional regulatory family.

It localises to the cytoplasm. Its function is as follows. Positively regulates the cynTSX operon, and negatively regulates its own transcription. Binds specifically to the cynR-cynTSX intergenic region. The chain is HTH-type transcriptional regulator CynR (cynR) from Escherichia coli (strain K12).